Here is a 352-residue protein sequence, read N- to C-terminus: Photosystem II D2 protein (352 aa).

Residues 40-60 (CAFMALGGWLTGTTFVTSWYT) traverse the membrane as a helical segment. H117 is a chlorophyll a binding site. A helical membrane pass occupies residues 124-140 (GFMLRQFEIARLVGIRP). Positions 129 and 142 each coordinate pheophytin a. A helical membrane pass occupies residues 152 to 165 (VFVSVFLMYPLGQS). A chlorophyll a-binding site is contributed by H197. Residues 207 to 227 (GALLCAIHGATVENTLFEDSD) form a helical membrane-spanning segment. Residues H214 and F261 each coordinate a plastoquinone. H214 contacts Fe cation. Residue H268 participates in Fe cation binding. Residues 278–294 (GLWMSSVGIVGLALNLR) traverse the membrane as a helical segment.

Belongs to the reaction center PufL/M/PsbA/D family. PSII is composed of 1 copy each of membrane proteins PsbA, PsbB, PsbC, PsbD, PsbE, PsbF, PsbH, PsbI, PsbJ, PsbK, PsbL, PsbM, PsbT, PsbX, PsbY, PsbZ, Psb30/Ycf12, peripheral proteins PsbO, CyanoQ (PsbQ), PsbU, PsbV and a large number of cofactors. It forms dimeric complexes. The D1/D2 heterodimer binds P680, chlorophylls that are the primary electron donor of PSII, and subsequent electron acceptors. It shares a non-heme iron and each subunit binds pheophytin, quinone, additional chlorophylls, carotenoids and lipids. There is also a Cl(-1) ion associated with D1 and D2, which is required for oxygen evolution. The PSII complex binds additional chlorophylls, carotenoids and specific lipids. serves as cofactor.

Its subcellular location is the cellular thylakoid membrane. It catalyses the reaction 2 a plastoquinone + 4 hnu + 2 H2O = 2 a plastoquinol + O2. In terms of biological role, photosystem II (PSII) is a light-driven water:plastoquinone oxidoreductase that uses light energy to abstract electrons from H(2)O, generating O(2) and a proton gradient subsequently used for ATP formation. It consists of a core antenna complex that captures photons, and an electron transfer chain that converts photonic excitation into a charge separation. The D1/D2 (PsbA/PsbD) reaction center heterodimer binds P680, the primary electron donor of PSII as well as several subsequent electron acceptors. D2 is needed for assembly of a stable PSII complex. The protein is Photosystem II D2 protein of Picosynechococcus sp. (strain ATCC 27264 / PCC 7002 / PR-6) (Agmenellum quadruplicatum).